The chain runs to 206 residues: 3-isopropylmalate dehydratase small subunit (206 aa).

The protein belongs to the LeuD family. LeuD type 1 subfamily. Heterodimer of LeuC and LeuD.

The catalysed reaction is (2R,3S)-3-isopropylmalate = (2S)-2-isopropylmalate. Its pathway is amino-acid biosynthesis; L-leucine biosynthesis; L-leucine from 3-methyl-2-oxobutanoate: step 2/4. Its function is as follows. Catalyzes the isomerization between 2-isopropylmalate and 3-isopropylmalate, via the formation of 2-isopropylmaleate. The protein is 3-isopropylmalate dehydratase small subunit of Leptospira borgpetersenii serovar Hardjo-bovis (strain JB197).